A 1420-amino-acid polypeptide reads, in one-letter code: Protein NPAT (1420 aa).

Residues 1-319 (MLLPSDVARL…EEAIQDILEQ (319 aa)) form an interaction with MIZF region. One can recognise a LisH domain in the interval 3 to 35 (LPSDVARLVLGYLQQENLTSTCQTFILESSNLK). Required for activation of histone gene transcription and interaction with MIZF stretches follow at residues 5–25 (SDVA…STCQ) and 121–145 (KRQR…YASG). Polar residues predominate over residues 179–190 (QPQSTVTNTAGE). Residues 179–236 (QPQSTVTNTAGESLNIIPGPQERKTQTSLMSPGRRKSESQKKSLTSSGPHSSRNFQDP) are disordered. Residue S209 is modified to Phosphoserine. Polar residues predominate over residues 220–235 (KSLTSSGPHSSRNFQD). Residues 263 to 339 (KLAENINKFL…FDLFDYGKTK (77 aa)) are mediates transcriptional activation. The segment covering 534 to 573 (SQSTPLTTKPSKSQLCENSNNIIKVKTNPQASESADSSET) has biased composition (polar residues). Disordered regions lie at residues 534–612 (SQST…GESL), 625–670 (EEPA…KDGD), and 696–727 (KNNN…NSTE). 2 positions are modified to phosphoserine: S552 and S598. Residues 628–652 (APSDKQLSNDAASVDLNPTESKTEP) are required for acceleration of G1 phase. The segment covering 632 to 658 (KQLSNDAASVDLNPTESKTEPLQSASA) has biased composition (polar residues). Residues 697–712 (NNNSLSSESGGSVGVS) are compositionally biased toward low complexity. Over residues 713 to 727 (PETQNTDGKTSNSTE) the composition is skewed to polar residues. S771 and S773 each carry phosphoserine; by CDK2. Required for acceleration of G1 phase stretches follow at residues 822–847 (QNED…IQLM) and 1033–1048 (KMED…RVAP). Disordered regions lie at residues 1089–1190 (ASFS…NGSL), 1202–1234 (LTKK…KPAS), and 1249–1297 (SPAN…SMPR). S1096 bears the Phosphoserine; by CDK2 mark. Residues K1112 and K1144 each participate in a glycyl lysine isopeptide (Lys-Gly) (interchain with G-Cter in SUMO2) cross-link. 2 stretches are compositionally biased toward basic and acidic residues: residues 1135–1146 (TVKEVQSEKKVS) and 1154–1177 (SLHK…KNAD). S1146 bears the Phosphoserine mark. The segment covering 1205–1219 (KQATPSNNKNATSVG) has biased composition (polar residues). At K1223 the chain carries N6-acetyllysine. Residues 1223–1247 (KDQKQEQSKPASSLIGAEILQDVPI) form a required for acceleration of G1 phase region. A Phosphoserine modification is found at S1249. At T1264 the chain carries Phosphothreonine; by CDK2. Basic and acidic residues predominate over residues 1270 to 1279 (GEKHKEEPSD). K1274 is covalently cross-linked (Glycyl lysine isopeptide (Lys-Gly) (interchain with G-Cter in SUMO2)). The tract at residues 1319 to 1342 (ENSVSMAAHTLMILSRAAIARTTA) is required for acceleration of G1 phase. T1343 is subject to Phosphothreonine; by CDK2. The segment at 1348-1400 (NTQQFRTSSRSTTKKRKIEELDECERNSRTSGKNLANSSVPMKKKKIKKKKLP) is disordered. Positions 1376–1387 (RTSGKNLANSSV) are enriched in polar residues. The segment covering 1389–1399 (MKKKKIKKKKL) has biased composition (basic residues).

The protein belongs to the NPAT family. Interacts with the cylin/CDK complexes CCNE1/CDK2 and CCNA1/CDK2. Interacts with BZW1, CASP8AP2, CREBBP, MIZF and YY1. Interacts with the RUVBL1, RUVBL2 and TRRAP subunits of the NuA4 complex. May also interact with GAPDH, NME1, NME2 and STIP1. Post-translationally, phosphorylated at Ser-771, Ser-773, Ser-1096, Thr-1264 and Thr-1343 by CCNE1/CDK2 at G1-S transition and until prophase, which promotes association with histone gene clusters and stimulates activation of histone transcription. Also phosphorylated by CCNA1/CDK2 in vitro.

The protein resides in the nucleus. In terms of biological role, required for progression through the G1 and S phases of the cell cycle and for S phase entry. Activates transcription of the histone H2A, histone H2B, histone H3 and histone H4 genes in conjunction with MIZF. Also positively regulates the ATM, MIZF and PRKDC promoters. Transcriptional activation may be accomplished at least in part by the recruitment of the NuA4 histone acetyltransferase (HAT) complex to target gene promoters. Required for early embryonic development. The protein is Protein NPAT (Npat) of Mus musculus (Mouse).